Reading from the N-terminus, the 134-residue chain is Holo-[acyl-carrier-protein] synthase (134 aa).

Residues Asp-8 and Glu-58 each contribute to the Mg(2+) site.

It belongs to the P-Pant transferase superfamily. AcpS family. Mg(2+) is required as a cofactor.

Its subcellular location is the cytoplasm. It carries out the reaction apo-[ACP] + CoA = holo-[ACP] + adenosine 3',5'-bisphosphate + H(+). Its function is as follows. Transfers the 4'-phosphopantetheine moiety from coenzyme A to a Ser of acyl-carrier-protein. The protein is Holo-[acyl-carrier-protein] synthase of Ruminiclostridium cellulolyticum (strain ATCC 35319 / DSM 5812 / JCM 6584 / H10) (Clostridium cellulolyticum).